The primary structure comprises 1339 residues: Retrotransposon Gag-like protein 9 (1339 aa).

Polar residues-rich tracts occupy residues 533 to 545 (TVPT…TQKT), 679 to 693 (SGTK…TTSG), and 700 to 711 (TRLSGPGATSTP). 6 disordered regions span residues 533-555 (TVPT…PMST), 679-711 (SGTK…TSTP), 845-864 (GVMS…SRPQ), 880-901 (PATA…LSTL), 982-1010 (ATSL…GAGS), and 1078-1116 (ATDS…PPKE). A compositionally biased stretch (low complexity) spans 891 to 901 (RSPASSTLSTL). Polar residues predominate over residues 1078–1106 (ATDSGEASTSHTRFTAPGSKSTPHMTSTA).

The chain is Retrotransposon Gag-like protein 9 from Mus musculus (Mouse).